Here is a 351-residue protein sequence, read N- to C-terminus: Translation initiation factor eIF2B subunit beta (351 aa).

This sequence belongs to the eIF-2B alpha/beta/delta subunits family. As to quaternary structure, component of the translation initiation factor 2B (eIF2B) complex which is a heterodecamer of two sets of five different subunits: alpha, beta, gamma, delta and epsilon. Subunits alpha, beta and delta comprise a regulatory subcomplex and subunits epsilon and gamma comprise a catalytic subcomplex. Within the complex, the hexameric regulatory complex resides at the center, with the two heterodimeric catalytic subcomplexes bound on opposite sides.

It localises to the cytoplasm. The protein localises to the cytosol. Activated by the chemical integrated stress response (ISR) inhibitor ISRIB which stimulates guanine nucleotide exchange factor activity for both phosphorylated and unphosphorylated eIF2. Functionally, acts as a component of the translation initiation factor 2B (eIF2B) complex, which catalyzes the exchange of GDP for GTP on eukaryotic initiation factor 2 (eIF2) gamma subunit. Its guanine nucleotide exchange factor activity is repressed when bound to eIF2 complex phosphorylated on the alpha subunit, thereby limiting the amount of methionyl-initiator methionine tRNA available to the ribosome and consequently global translation is repressed. The protein is Translation initiation factor eIF2B subunit beta (EIF2B2) of Homo sapiens (Human).